We begin with the raw amino-acid sequence, 60 residues long: Putative mercuric resistance protein (60 aa).

In Shigella flexneri, this protein is Putative mercuric resistance protein.